A 623-amino-acid chain; its full sequence is uncharacterized protein (623 aa).

Transmembrane regions (helical) follow at residues 242–262 (IALA…ITWL), 288–308 (IVSP…LDIF), 318–338 (VSMW…IALF), 361–381 (VINL…LLGV), and 387–407 (FNVS…ALAV).

It belongs to the MscS (TC 1.A.23) family.

It is found in the cell membrane. This is an uncharacterized protein from Helicobacter pylori (strain J99 / ATCC 700824) (Campylobacter pylori J99).